A 348-amino-acid chain; its full sequence is MRFEGSNSMTLLVDDLVSQAQERFAAASDAAALENAKARFLGKEGALTVLLKALGKLDPEQKREMGARINQAKQQIEALLNARRAALAQAELDARLASETIDVTLPGRGKAAGGIHPVIRTWERVEEIFRSIGFDVADGPEVENDWTNFTALNNPLDHPARSMQDTFYVDMHDADGLPLLLRTHTSPMQVRYARMHKPPIKVIAPGRTYRVDSGATHSPMFHQVEGLWIAEDISFADLKGVYTDFLRCFFESDDLVVRFRPSFFPFTEPSAEIDMMFTSGPNRGRWLEISGSGQVHPQVVRNFGLDPERYIGFAFGSGLERLTMLRYGVNDLRQFYEGDLRFLRQFNE.

Glu-268 contributes to the Mg(2+) binding site.

This sequence belongs to the class-II aminoacyl-tRNA synthetase family. Phe-tRNA synthetase alpha subunit type 1 subfamily. As to quaternary structure, tetramer of two alpha and two beta subunits. Mg(2+) is required as a cofactor.

The protein localises to the cytoplasm. It catalyses the reaction tRNA(Phe) + L-phenylalanine + ATP = L-phenylalanyl-tRNA(Phe) + AMP + diphosphate + H(+). The sequence is that of Phenylalanine--tRNA ligase alpha subunit from Bordetella parapertussis (strain 12822 / ATCC BAA-587 / NCTC 13253).